Here is a 77-residue protein sequence, read N- to C-terminus: NADH dehydrogenase [ubiquinone] 1 alpha subcomplex subunit 3 (77 aa).

Residues 23-45 (IVGGSALALAGIVMATIGVANYY) form a helical membrane-spanning segment.

This sequence belongs to the complex I NDUFA3 subunit family. As to quaternary structure, complex I is composed of 43 different subunits.

Its subcellular location is the mitochondrion inner membrane. The protein resides in the cytoplasm. The protein localises to the myofibril. It localises to the sarcomere. It is found in the z line. Its function is as follows. Accessory subunit of the mitochondrial membrane respiratory chain NADH dehydrogenase (Complex I), that is believed not to be involved in catalysis. Complex I functions in the transfer of electrons from NADH to the respiratory chain. The immediate electron acceptor for the enzyme is believed to be ubiquinone. Required for the maintenance of muscle integrity and for cell proliferation in the wing imaginal disc epithelium, possibly by interacting with the chaperone-assisted selective autophagy (CASA) pathway. The chain is NADH dehydrogenase [ubiquinone] 1 alpha subcomplex subunit 3 from Drosophila melanogaster (Fruit fly).